Reading from the N-terminus, the 240-residue chain is Probable transcriptional regulatory protein jhp_0149 (240 aa).

It belongs to the TACO1 family.

It localises to the cytoplasm. This chain is Probable transcriptional regulatory protein jhp_0149, found in Helicobacter pylori (strain J99 / ATCC 700824) (Campylobacter pylori J99).